Consider the following 1070-residue polypeptide: DNA-directed RNA polymerase subunit beta (1070 aa).

Belongs to the RNA polymerase beta chain family. As to quaternary structure, in plastids the minimal PEP RNA polymerase catalytic core is composed of four subunits: alpha, beta, beta', and beta''. When a (nuclear-encoded) sigma factor is associated with the core the holoenzyme is formed, which can initiate transcription.

The protein localises to the plastid. The protein resides in the chloroplast. It catalyses the reaction RNA(n) + a ribonucleoside 5'-triphosphate = RNA(n+1) + diphosphate. Its function is as follows. DNA-dependent RNA polymerase catalyzes the transcription of DNA into RNA using the four ribonucleoside triphosphates as substrates. The chain is DNA-directed RNA polymerase subunit beta from Lotus japonicus (Lotus corniculatus var. japonicus).